The following is a 104-amino-acid chain: uncharacterized protein (104 aa).

This is an uncharacterized protein from Schizosaccharomyces pombe (strain 972 / ATCC 24843) (Fission yeast).